A 252-amino-acid polypeptide reads, in one-letter code: Imidazole glycerol phosphate synthase subunit HisF (252 aa).

Active-site residues include aspartate 11 and aspartate 130.

Belongs to the HisA/HisF family. Heterodimer of HisH and HisF.

It localises to the cytoplasm. It catalyses the reaction 5-[(5-phospho-1-deoxy-D-ribulos-1-ylimino)methylamino]-1-(5-phospho-beta-D-ribosyl)imidazole-4-carboxamide + L-glutamine = D-erythro-1-(imidazol-4-yl)glycerol 3-phosphate + 5-amino-1-(5-phospho-beta-D-ribosyl)imidazole-4-carboxamide + L-glutamate + H(+). It participates in amino-acid biosynthesis; L-histidine biosynthesis; L-histidine from 5-phospho-alpha-D-ribose 1-diphosphate: step 5/9. Its function is as follows. IGPS catalyzes the conversion of PRFAR and glutamine to IGP, AICAR and glutamate. The HisF subunit catalyzes the cyclization activity that produces IGP and AICAR from PRFAR using the ammonia provided by the HisH subunit. The chain is Imidazole glycerol phosphate synthase subunit HisF from Moorella thermoacetica (strain ATCC 39073 / JCM 9320).